The chain runs to 241 residues: MKLEQRYEGKAKKVYATENPLEYVVEYKDDATAFNGVKRAQIVGKGQINNAITAHLFPLLEEAGVPTHFLEKLSEREQRVRAVTIIPVEVIVRNVAAGSFAKRLGLEEGTPLARPVVEYCLKSDALGDPLINTDTAVALGWASEDDLKRIRELALKVRDFLTPYFAARGIRLIDFKLEFGRTHDGQIVLADEISPDTCRFWDAATNEKLDKDRFRRDLGGVEDAYAEMLRRVTGEGGRDEG.

It belongs to the SAICAR synthetase family.

It catalyses the reaction 5-amino-1-(5-phospho-D-ribosyl)imidazole-4-carboxylate + L-aspartate + ATP = (2S)-2-[5-amino-1-(5-phospho-beta-D-ribosyl)imidazole-4-carboxamido]succinate + ADP + phosphate + 2 H(+). It functions in the pathway purine metabolism; IMP biosynthesis via de novo pathway; 5-amino-1-(5-phospho-D-ribosyl)imidazole-4-carboxamide from 5-amino-1-(5-phospho-D-ribosyl)imidazole-4-carboxylate: step 1/2. This Deinococcus geothermalis (strain DSM 11300 / CIP 105573 / AG-3a) protein is Phosphoribosylaminoimidazole-succinocarboxamide synthase.